We begin with the raw amino-acid sequence, 258 residues long: Adenylate kinase (258 aa).

52–57 (GAGKGT) serves as a coordination point for ATP. Residues 72-101 (ATGDMLRSQVAKKTELGKEAKKIMDQGGLV) form an NMP region. Residues Thr-73, Arg-78, 99 to 101 (GLV), 128 to 131 (GFPR), and Gln-135 contribute to the AMP site. The tract at residues 169–206 (GRLVHPASGRSYHKVFNPPKQEMKDDITGEPLIQRSDD) is LID. ATP-binding positions include Arg-170 and 179–180 (SY). Residues Arg-203 and Arg-214 each coordinate AMP. An ATP-binding site is contributed by Gln-242.

Belongs to the adenylate kinase family. AK2 subfamily. In terms of assembly, monomer.

The protein resides in the cytoplasm. It localises to the cytosol. Its subcellular location is the mitochondrion intermembrane space. The catalysed reaction is AMP + ATP = 2 ADP. Functionally, catalyzes the reversible transfer of the terminal phosphate group between ATP and AMP. Plays an important role in cellular energy homeostasis and in adenine nucleotide metabolism. Adenylate kinase activity is critical for regulation of the phosphate utilization and the AMP de novo biosynthesis pathways. The protein is Adenylate kinase (adk1) of Aspergillus oryzae (strain ATCC 42149 / RIB 40) (Yellow koji mold).